Consider the following 600-residue polypeptide: NAD-dependent malic enzyme, mitochondrial (600 aa).

A mitochondrion-targeting transit peptide spans 1-68 (MTRTPFTLSL…NMPIAAPVRT (68 aa)). Residue Arg-93 coordinates fumarate. Residue Tyr-138 is the Proton donor of the active site. Arg-194 contributes to the (S)-malate binding site. Arg-194 serves as a coordination point for NAD(+). The active-site Proton acceptor is the Lys-212. Residues Glu-283, Asp-284, and Asp-307 each contribute to the a divalent metal cation site. The NAD(+) site is built by Gly-344 and Ala-347. (S)-malate contacts are provided by Asn-458 and Asn-502.

Belongs to the malic enzymes family. It depends on Mg(2+) as a cofactor. Requires Mn(2+) as cofactor.

Its subcellular location is the mitochondrion matrix. The protein resides in the cytoplasm. The protein localises to the cytosol. It localises to the nucleus. It carries out the reaction (S)-malate + NAD(+) = pyruvate + CO2 + NADH. The catalysed reaction is oxaloacetate + H(+) = pyruvate + CO2. Its function is as follows. NAD-dependent mitochondrial malic enzyme that catalyzes the oxidative decarboxylation of malate to pyruvate. The protein is NAD-dependent malic enzyme, mitochondrial of Cryptococcus neoformans var. grubii serotype A (strain H99 / ATCC 208821 / CBS 10515 / FGSC 9487) (Filobasidiella neoformans var. grubii).